The following is a 321-amino-acid chain: Collectin-43 (321 aa).

The signal sequence occupies residues 1–20 (MLPLPLSILLLLTQSQSFLG). The tract at residues 43–163 (PADSLRGHDG…GEKGARGETS (121 aa)) is disordered. Residues 47 to 65 (LRGHDGRDGKEGPQGEKGD) are compositionally biased toward basic and acidic residues. Positions 49-162 (GHDGRDGKEG…PGEKGARGET (114 aa)) constitute a Collagen-like domain. 2 stretches are compositionally biased toward gly residues: residues 100–109 (GPEGGVGAPG) and 124–133 (GTPGPGGAIG). Positions 147-159 (KGDRGDPGEKGAR) are enriched in basic and acidic residues. A C-type lectin domain is found at 222–321 (QLCREAKGQL…REERLVICEF (100 aa)). 2 cysteine pairs are disulfide-bonded: Cys224/Cys319 and Cys297/Cys311.

Belongs to the SFTPD family. As to quaternary structure, oligomeric complex of 4 set of homotrimers. In terms of processing, hydroxylated. As to expression, liver specific.

It is found in the secreted. Lectin that binds to various sugars: mannose = ManNAc &gt; fucose &gt; GlcNAc &gt; glucose = maltose &gt; galactose &gt; lactose &gt; GalNAc. Could play a role in immune defense. The protein is Collectin-43 (CL43) of Bos taurus (Bovine).